The chain runs to 216 residues: Thymidylate kinase (216 aa).

10-17 (GPDGAGKS) contacts ATP.

Belongs to the thymidylate kinase family.

The catalysed reaction is dTMP + ATP = dTDP + ADP. In terms of biological role, phosphorylation of dTMP to form dTDP in both de novo and salvage pathways of dTTP synthesis. The sequence is that of Thymidylate kinase from Lactobacillus acidophilus (strain ATCC 700396 / NCK56 / N2 / NCFM).